The primary structure comprises 170 residues: Adenine phosphoribosyltransferase (170 aa).

The protein belongs to the purine/pyrimidine phosphoribosyltransferase family. Homodimer.

The protein localises to the cytoplasm. It carries out the reaction AMP + diphosphate = 5-phospho-alpha-D-ribose 1-diphosphate + adenine. It participates in purine metabolism; AMP biosynthesis via salvage pathway; AMP from adenine: step 1/1. Catalyzes a salvage reaction resulting in the formation of AMP, that is energically less costly than de novo synthesis. This is Adenine phosphoribosyltransferase from Mesoplasma florum (strain ATCC 33453 / NBRC 100688 / NCTC 11704 / L1) (Acholeplasma florum).